The following is a 1648-amino-acid chain: Pleiotropic ABC efflux transporter of multiple drugs YBT1 (1648 aa).

A helical transmembrane segment spans residues 28 to 48; it reads NYVPTTLVTISILILLHNFFI. Asn72 carries an N-linked (GlcNAc...) asparagine glycan. Transmembrane regions (helical) follow at residues 140–160, 175–195, 207–227, and 250–270; these read VVIEFVIVAFQLLLHCYLSIE, PHVLLWTILFTLATLRVLNLN, NIWLVSFANYTVIFLAHILPF, and LNLVLMALLLTSPIGNNLPVL. A glycan (N-linked (GlcNAc...) asparagine) is linked at Asn306. The next 2 helical transmembrane spans lie at 352–372 and 392–412; these read FLNLFMFQWCFTTISAFSIFV and MNLAWFYVFGMFISRFIVAIC. Residues 361–674 enclose the ABC transmembrane type-1 1 domain; the sequence is CFTTISAFSI…ISDMLSYLIQ (314 aa). N-linked (GlcNAc...) asparagine glycosylation is present at Asn471. 2 helical membrane-spanning segments follow: residues 501-521 and 523-543; these read ISELCAYLHYFLETAIMLTVS and ILLYKVIGTAAFVGILITIII. A glycan (N-linked (GlcNAc...) asparagine) is linked at Asn573. The next 2 helical transmembrane spans lie at 612–632 and 643–662; these read VWCVLAFSWFITPTLITGCTF and LTTPVAFTALSLFTLLRDPL. The ABC transporter 1 domain maps to 706–947; that stretch reads LAFENVTLRW…GLLGEDENMK (242 aa). The N-linked (GlcNAc...) asparagine glycan is linked to Asn710. 741 to 748 contacts ATP; sequence GATGSGKT. Residues Asn784 and Asn798 are each glycosylated (N-linked (GlcNAc...) asparagine). Residues 1012 to 1032 traverse the membrane as a helical segment; that stretch reads MYGGWYTIVALASVFTAILCL. In terms of domain architecture, ABC transmembrane type-1 2 spans 1032-1333; that stretch reads LQITQAWWIR…LVRQYSELEM (302 aa). N-linked (GlcNAc...) asparagine glycosylation is present at Asn1042. 3 consecutive transmembrane segments (helical) span residues 1089-1109, 1168-1188, and 1191-1211; these read IAKFLVVYCLIGVMSSIIGSI, IQSVFYSAIEVFATLLLISYI, and AFFPVAIIIVLGYSIVGFFYL. N-linked (GlcNAc...) asparagine glycosylation is present at Asn1255. Helical transmembrane passes span 1282–1302 and 1305–1325; these read LIGALVIFSSGVFILLNINNI and GLAGISLTYAISFTEAALWLV. One can recognise an ABC transporter 2 domain in the interval 1372 to 1622; sequence VEVNNLSLKY…KKSIFYNMCE (251 aa). Asn1376 carries an N-linked (GlcNAc...) asparagine glycan. 1406–1413 contributes to the ATP binding site; that stretch reads GRTGAGKS. N-linked (GlcNAc...) asparagine glycans are attached at residues Asn1503, Asn1524, and Asn1573.

Belongs to the ABC transporter superfamily. ABCC family. Conjugate transporter (TC 3.A.1.208) subfamily.

The protein localises to the membrane. Functionally, pleiotropic ABC efflux transporter that might be involved in the resistance to azoles such as fluconazole. The polypeptide is Pleiotropic ABC efflux transporter of multiple drugs YBT1 (Candida glabrata (strain ATCC 2001 / BCRC 20586 / JCM 3761 / NBRC 0622 / NRRL Y-65 / CBS 138) (Yeast)).